The chain runs to 428 residues: Elongation factor 1-alpha (428 aa).

A tr-type G domain is found at 5–225 (KPILNVAFIG…DAFQPPEKPT (221 aa)). A G1 region spans residues 14-21 (GHVDAGKS). Position 14–21 (14–21 (GHVDAGKS)) interacts with GTP. S21 is a Mg(2+) binding site. The tract at residues 70-74 (GVTID) is G2. Residues 91 to 94 (DCPG) form a G3 region. GTP contacts are provided by residues 91-95 (DCPGH) and 149-152 (NKMD). The tract at residues 149-152 (NKMD) is G4. Residues 189-191 (ASL) form a G5 region.

It belongs to the TRAFAC class translation factor GTPase superfamily. Classic translation factor GTPase family. EF-Tu/EF-1A subfamily.

The protein resides in the cytoplasm. It catalyses the reaction GTP + H2O = GDP + phosphate + H(+). Functionally, GTP hydrolase that promotes the GTP-dependent binding of aminoacyl-tRNA to the A-site of ribosomes during protein biosynthesis. This chain is Elongation factor 1-alpha, found in Methanococcus maripaludis (strain C7 / ATCC BAA-1331).